A 148-amino-acid polypeptide reads, in one-letter code: Nucleoside diphosphate kinase B (148 aa).

ATP is bound by residues Lys9, Phe57, Arg85, Thr91, Arg102, and Asn112. His115 serves as the catalytic Pros-phosphohistidine intermediate.

Belongs to the NDK family. Mg(2+) serves as cofactor.

It catalyses the reaction a 2'-deoxyribonucleoside 5'-diphosphate + ATP = a 2'-deoxyribonucleoside 5'-triphosphate + ADP. It carries out the reaction a ribonucleoside 5'-diphosphate + ATP = a ribonucleoside 5'-triphosphate + ADP. Its function is as follows. Major role in the synthesis of nucleoside triphosphates other than ATP. The ATP gamma phosphate is transferred to the NDP beta phosphate via a ping-pong mechanism, using a phosphorylated active-site intermediate. This Flaveria bidentis (Coastal plain yellowtops) protein is Nucleoside diphosphate kinase B.